The primary structure comprises 173 residues: Photosystem I assembly protein Ycf3 (173 aa).

TPR repeat units lie at residues 35 to 68, 72 to 105, and 120 to 153; these read AYIY…EENK, GETL…NPKQ, and GRNA…YPGG.

It belongs to the Ycf3 family.

The protein resides in the cellular thylakoid membrane. Essential for the assembly of the photosystem I (PSI) complex. May act as a chaperone-like factor to guide the assembly of the PSI subunits. In Prochlorococcus marinus (strain MIT 9301), this protein is Photosystem I assembly protein Ycf3.